The sequence spans 174 residues: Chorion protein S18 (174 aa).

Positions 1–17 are cleaved as a signal peptide; the sequence is MMKFMCIFICAVAAVSA. The span at 154-165 shows a compositional bias: low complexity; sequence AAAASSSVAGVA. Residues 154 to 174 are disordered; sequence AAAASSSVAGVAKKGYRKSSY.

It belongs to the chorion protein S15/S18 family.

It localises to the secreted. In terms of biological role, chorion membrane (egg shell) protein; plays a role in protecting the egg from the environment. This chain is Chorion protein S18 (Cp18), found in Drosophila subobscura (Fruit fly).